We begin with the raw amino-acid sequence, 287 residues long: Inorganic pyrophosphatase (287 aa).

Arg80 serves as a coordination point for diphosphate. Positions 117, 122, and 154 each coordinate Mg(2+).

It belongs to the PPase family. Requires Mg(2+) as cofactor.

It is found in the cytoplasm. It carries out the reaction diphosphate + H2O = 2 phosphate + H(+). In Yarrowia lipolytica (strain CLIB 122 / E 150) (Yeast), this protein is Inorganic pyrophosphatase (IPP1).